A 238-amino-acid chain; its full sequence is Sugar fermentation stimulation protein homolog (238 aa).

It belongs to the SfsA family.

The sequence is that of Sugar fermentation stimulation protein homolog from Pseudoalteromonas translucida (strain TAC 125).